Here is a 1399-residue protein sequence, read N- to C-terminus: DNA-directed RNA polymerase subunit beta' (1399 aa).

Zn(2+)-binding residues include Cys70, Cys72, Cys85, and Cys88. Mg(2+)-binding residues include Asp460, Asp462, and Asp464. Residues Cys814, Cys888, Cys895, and Cys898 each coordinate Zn(2+).

It belongs to the RNA polymerase beta' chain family. The RNAP catalytic core consists of 2 alpha, 1 beta, 1 beta' and 1 omega subunit. When a sigma factor is associated with the core the holoenzyme is formed, which can initiate transcription. Requires Mg(2+) as cofactor. Zn(2+) serves as cofactor.

The catalysed reaction is RNA(n) + a ribonucleoside 5'-triphosphate = RNA(n+1) + diphosphate. Functionally, DNA-dependent RNA polymerase catalyzes the transcription of DNA into RNA using the four ribonucleoside triphosphates as substrates. This is DNA-directed RNA polymerase subunit beta' from Ectopseudomonas mendocina (strain ymp) (Pseudomonas mendocina).